The sequence spans 336 residues: E3 ubiquitin-protein ligase RING2 (336 aa).

N-acetylserine is present on S2. Residues 2-179 form an interaction with HIP2 region; the sequence is SQAVQTNGTQ…AEDNGDSSHC (178 aa). A Phosphoserine modification is found at S41. The segment at 51–91 adopts an RING-type zinc-finger fold; it reads CPICLDMLKNTMTTKECLHRFCADCIITALRSGNKECPTCR. Residues 93–98 form an interaction with nucleosomes via an acidic patch on histone H2A and histone H2B region; the sequence is KLVSKR. Residue K112 forms a Glycyl lysine isopeptide (Lys-Gly) (interchain with G-Cter in ubiquitin) linkage. Phosphoserine occurs at positions 143 and 168. The interval 157 to 213 is disordered; sequence QRGKKQQIENGSGAEDNGDSSHCSNASTHSNQEAGPSNKRTKTSDDSGLEPDNNNAA. A compositionally biased stretch (polar residues) spans 176–191; sequence SSHCSNASTHSNQEAG. Glycyl lysine isopeptide (Lys-Gly) (interchain with G-Cter in SUMO2) cross-links involve residues K249 and K323.

Component of chromatin-associated Polycomb (PcG) complexes. Component of a number of PRC1-like complexes; these complexes contain either the polycomb group ring finger protein PCGF1, or PCGF2, or PCGF3, or BMI1, or PCGF5, or PCGF6. Distinct PRC1-like complexes are composed of a RING1 subunit (RING1B or RING1A), one of the six PCGF proteins (PCGF1, PCGF2, PCGF3, BMI1, PCGF5 or PCGF6), one PHC protein (PHC1, PHC2 or PHC3) and one of the CBX proteins (CBX2, CBX4, CBX6, CBX7 or CBX8). Part of a complex that contains RNF2, UB2D3 and BMI1; within that complex RNF2 and BMI1 form a tight heterodimer, where UB2D3 interacts only with RNF2. The complex composed of RNF2, UB2D3 and BMI1 binds nucleosomes, and has activity only with nucleosomal histone H2A. Part of a complex that contains PCGF5, RNF2 and UBE2D3. Part of a complex that contains AUTS2, PCGF5, RNF2, CSNK2B and RYBP. Interacts with CBX6 and CBX8. Interacts with PHC1, PCGF2, RYBP, CBX7, CBX4, CBX2, RNF1/RING1, BMI1 and PHC2. Interaction with RYBP and CBX7 is mutually exclusive; both compete for the same binding site on RNF2. Component of repressive BCOR complex containing a Polycomb group subcomplex at least composed of RYBP, PCGF1, BCOR and RING1. Interacts with CBX2 and PHC1. Interacts with CHTOP. Interacts with AURKB. Part of the E2F6.com-1 complex in G0 phase composed of E2F6, MGA, MAX, TFDP1, CBX3, BAT8, EUHMTASE1, RNF1/RING1, RNF2/RING2, MBLR, L3MBTL2 and YAF2. Component of some MLL1/MLL complex, at least composed of the core components KMT2A/MLL1, ASH2L, HCFC1/HCF1, WDR5 and RBBP5, as well as the facultative components BACC1, CHD8, E2F6, HSP70, INO80C, KANSL1, LAS1L, MAX, MCRS1, MGA, MYST1/MOF, PELP1, PHF20, PRP31, RING2, RUVB1/TIP49A, RUVB2/TIP49B, SENP3, TAF1, TAF4, TAF6, TAF7, TAF9 and TEX10. Interacts with RYBP, HIP2 and TFCP2. Interacts with NUPR1. Interacts with SAMD7 in a PHC2-dependent manner. In terms of processing, monoubiquitinated, by auto-ubiquitination. Polyubiquitinated in the presence of UBE2D3 (in vitro).

Its subcellular location is the nucleus. The protein resides in the cytoplasm. The protein localises to the chromosome. The enzyme catalyses S-ubiquitinyl-[E2 ubiquitin-conjugating enzyme]-L-cysteine + [acceptor protein]-L-lysine = [E2 ubiquitin-conjugating enzyme]-L-cysteine + N(6)-ubiquitinyl-[acceptor protein]-L-lysine.. Its pathway is protein modification; protein ubiquitination. Functionally, E3 ubiquitin-protein ligase that mediates monoubiquitination of 'Lys-119' of histone H2A (H2AK119Ub), thereby playing a central role in histone code and gene regulation. H2AK119Ub gives a specific tag for epigenetic transcriptional repression and participates in X chromosome inactivation of female mammals. May be involved in the initiation of both imprinted and random X inactivation. Essential component of a Polycomb group (PcG) multiprotein PRC1-like complex, a complex class required to maintain the transcriptionally repressive state of many genes, including Hox genes, throughout development. PcG PRC1 complex acts via chromatin remodeling and modification of histones, rendering chromatin heritably changed in its expressibility. E3 ubiquitin-protein ligase activity is enhanced by BMI1/PCGF4. Acts as the main E3 ubiquitin ligase on histone H2A of the PRC1 complex, while RING1 may rather act as a modulator of RNF2/RING2 activity. Plays a role in the transcriptional repression of genes that are required for pluripotency in embryonic stem cells, thereby contributing to differentiation of the ectodermal and endodermal germ layers. Association with the chromosomal DNA is cell-cycle dependent. In resting B- and T-lymphocytes, interaction with AURKB leads to block its activity, thereby maintaining transcription in resting lymphocytes. Also acts as a negative regulator of autophagy by mediating ubiquitination of AMBRA1, leading to its subsequent degradation. This chain is E3 ubiquitin-protein ligase RING2 (RNF2), found in Pongo abelii (Sumatran orangutan).